A 130-amino-acid chain; its full sequence is Small ribosomal subunit protein uS8 (130 aa).

The protein belongs to the universal ribosomal protein uS8 family. Part of the 30S ribosomal subunit.

In terms of biological role, one of the primary rRNA binding proteins, it binds directly to 16S rRNA central domain where it helps coordinate assembly of the platform of the 30S subunit. The chain is Small ribosomal subunit protein uS8 from Pyrococcus horikoshii (strain ATCC 700860 / DSM 12428 / JCM 9974 / NBRC 100139 / OT-3).